The primary structure comprises 504 residues: ATP synthase subunit alpha (504 aa).

172-179 serves as a coordination point for ATP; the sequence is GDRQTGKT.

This sequence belongs to the ATPase alpha/beta chains family. F-type ATPases have 2 components, CF(1) - the catalytic core - and CF(0) - the membrane proton channel. CF(1) has five subunits: alpha(3), beta(3), gamma(1), delta(1), epsilon(1). CF(0) has three main subunits: a(1), b(2) and c(9-12). The alpha and beta chains form an alternating ring which encloses part of the gamma chain. CF(1) is attached to CF(0) by a central stalk formed by the gamma and epsilon chains, while a peripheral stalk is formed by the delta and b chains.

Its subcellular location is the cell inner membrane. It catalyses the reaction ATP + H2O + 4 H(+)(in) = ADP + phosphate + 5 H(+)(out). In terms of biological role, produces ATP from ADP in the presence of a proton gradient across the membrane. The alpha chain is a regulatory subunit. The polypeptide is ATP synthase subunit alpha (Petrotoga mobilis (strain DSM 10674 / SJ95)).